A 201-amino-acid chain; its full sequence is Dermatopontin (201 aa).

The signal sequence occupies residues 1-18 (MDLTLLWVLLPLVTVAWG). The residue at position 19 (Gln19) is a Pyrrolidone carboxylic acid. The residue at position 23 (Tyr23) is a Sulfotyrosine. Tandem repeats lie at residues 26 to 79 (SYHQ…ACMP), 70 to 75 (DRQWNY), 80 to 135 (TPQS…CCRY), and 125 to 130 (DREWQF). The 2 X 53-55 AA tandem repeats stretch occupies residues 26-135 (SYHQYHDYSD…REWQFYCCRY (110 aa)). 5 cysteine pairs are disulfide-bonded: Cys50/Cys77, Cys90/Cys132, Cys106/Cys133, Cys139/Cys196, and Cys143/Cys189. The segment at 70-186 (DRQWNYACMP…AVERDRQWKF (117 aa)) is 3 X 6 AA tandem repeats of D-R-[EQ]-W-[NQK]-[FY]. Tyr162, Tyr164, Tyr166, and Tyr167 each carry sulfotyrosine. Residues 181 to 186 (DRQWKF) form a 2-3 repeat. At Tyr194 the chain carries Sulfotyrosine.

Belongs to the dermatopontin family. In terms of assembly, interacts with TGFB1, DCN and collagen. Sulfated on tyrosine residue(s). Expressed in skeletal muscle, heart, pancreas, skin and cultured fibroblasts.

Its subcellular location is the secreted. It localises to the extracellular space. The protein localises to the extracellular matrix. Seems to mediate adhesion by cell surface integrin binding. May serve as a communication link between the dermal fibroblast cell surface and its extracellular matrix environment. Enhances TGFB1 activity. Inhibits cell proliferation. Accelerates collagen fibril formation, and stabilizes collagen fibrils against low-temperature dissociation. This chain is Dermatopontin (DPT), found in Bos taurus (Bovine).